A 113-amino-acid polypeptide reads, in one-letter code: UPF0122 protein MCAP_0480 (113 aa).

It belongs to the UPF0122 family.

Might take part in the signal recognition particle (SRP) pathway. This is inferred from the conservation of its genetic proximity to ftsY/ffh. May be a regulatory protein. The protein is UPF0122 protein MCAP_0480 of Mycoplasma capricolum subsp. capricolum (strain California kid / ATCC 27343 / NCTC 10154).